Consider the following 455-residue polypeptide: Growth/differentiation factor 6 (455 aa).

Residues 1-22 (MDTPRVLLSAVFLISFLWDLPG) form the signal peptide. The propeptide occupies 23–335 (FQQASISSSS…LPSPGRRRRR (313 aa)). A disordered region spans residues 29-93 (SSSSSSAELG…EPPGRGPRVV (65 aa)). Residues 45 to 76 (SRKEGKMQRAPRDSDAGREGQEPQPRPQDEPR) are compositionally biased toward basic and acidic residues. Residues 77-91 (AQQPRAQEPPGRGPR) show a composition bias toward low complexity. An N-linked (GlcNAc...) asparagine glycan is attached at Asn-114. Disordered stretches follow at residues 244 to 267 (EAEA…GFGR) and 300 to 351 (AEAA…KKSR). Over residues 330–351 (GRRRRRTAFASRHGKRHGKKSR) the composition is skewed to basic residues. Intrachain disulfides connect Cys-354–Cys-420, Cys-383–Cys-452, and Cys-387–Cys-454.

Belongs to the TGF-beta family. In terms of assembly, homodimer; disulfide-linked.

It localises to the secreted. Functionally, growth factor that controls proliferation and cellular differentiation in the retina and bone formation. Plays a key role in regulating apoptosis during retinal development. Establishes dorsal-ventral positional information in the retina and controls the formation of the retinotectal map. Required for normal formation of bones and joints in the limbs, skull, digits and axial skeleton. Plays a key role in establishing boundaries between skeletal elements during development. Regulation of GDF6 expression seems to be a mechanism for evolving species-specific changes in skeletal structures. Seems to positively regulate differentiation of chondrogenic tissue through the growth factor receptors subunits BMPR1A, BMPR1B, BMPR2 and ACVR2A, leading to the activation of SMAD1-SMAD5-SMAD8 complex. The regulation of chondrogenic differentiation is inhibited by NOG. Also involved in the induction of adipogenesis from mesenchymal stem cells. This mechanism acts through the growth factor receptors subunits BMPR1A, BMPR2 and ACVR2A and the activation of SMAD1-SMAD5-SMAD8 complex and MAPK14/p38. This Homo sapiens (Human) protein is Growth/differentiation factor 6 (GDF6).